The chain runs to 277 residues: Putative acetylornithine deacetylase (277 aa).

It carries out the reaction N(2)-acetyl-L-ornithine + H2O = L-ornithine + acetate. It functions in the pathway amino-acid biosynthesis; L-arginine biosynthesis; L-ornithine from N(2)-acetyl-L-ornithine (linear): step 1/1. The polypeptide is Putative acetylornithine deacetylase (argE) (Leptospira biflexa).